Consider the following 157-residue polypeptide: 2-C-methyl-D-erythritol 2,4-cyclodiphosphate synthase (157 aa).

Positions 8 and 10 each coordinate a divalent metal cation. Residues 8–10 (DVH) and 34–35 (HS) contribute to the 4-CDP-2-C-methyl-D-erythritol 2-phosphate site. His42 contacts a divalent metal cation. 4-CDP-2-C-methyl-D-erythritol 2-phosphate is bound by residues 56–58 (DIG), 61–65 (FPDTD), 100–106 (AQAPKMA), 132–135 (TTTE), Phe139, and Arg142.

This sequence belongs to the IspF family. As to quaternary structure, homotrimer. A divalent metal cation serves as cofactor.

It catalyses the reaction 4-CDP-2-C-methyl-D-erythritol 2-phosphate = 2-C-methyl-D-erythritol 2,4-cyclic diphosphate + CMP. Its pathway is isoprenoid biosynthesis; isopentenyl diphosphate biosynthesis via DXP pathway; isopentenyl diphosphate from 1-deoxy-D-xylulose 5-phosphate: step 4/6. Its function is as follows. Involved in the biosynthesis of isopentenyl diphosphate (IPP) and dimethylallyl diphosphate (DMAPP), two major building blocks of isoprenoid compounds. Catalyzes the conversion of 4-diphosphocytidyl-2-C-methyl-D-erythritol 2-phosphate (CDP-ME2P) to 2-C-methyl-D-erythritol 2,4-cyclodiphosphate (ME-CPP) with a corresponding release of cytidine 5-monophosphate (CMP). In Azotobacter vinelandii (strain DJ / ATCC BAA-1303), this protein is 2-C-methyl-D-erythritol 2,4-cyclodiphosphate synthase.